The primary structure comprises 714 residues: Hormonally up-regulated neu tumor-associated kinase (714 aa).

Residues 1 to 16 (MPAAAGDGLLGEPAAP) are compositionally biased toward low complexity. Residues 1–28 (MPAAAGDGLLGEPAAPGGDGGAEDTTRP) are disordered. The 259-residue stretch at 62–320 (LIGSRKLGEG…IQQALANRWL (259 aa)) folds into the Protein kinase domain. ATP-binding positions include 68–76 (LGEGSFAKV) and Lys91. The active-site Proton acceptor is Asp186. Positions 624-635 (HEEKNSPPKEEG) are enriched in basic and acidic residues. 2 disordered regions span residues 624–658 (HEEK…NCVK) and 674–714 (KRHQ…KGQC). Polar residues predominate over residues 692–703 (SPLQPTAPSSLS).

This sequence belongs to the protein kinase superfamily. CAMK Ser/Thr protein kinase family. SNF1 subfamily.

The enzyme catalyses L-seryl-[protein] + ATP = O-phospho-L-seryl-[protein] + ADP + H(+). It catalyses the reaction L-threonyl-[protein] + ATP = O-phospho-L-threonyl-[protein] + ADP + H(+). The polypeptide is Hormonally up-regulated neu tumor-associated kinase (Hunk) (Mus musculus (Mouse)).